Here is a 457-residue protein sequence, read N- to C-terminus: MALWGGRFTQAADQRFKQFNDSLRFDYRLAEQDIVGSVAWSKALVTVGVLTAEEQVQLEEALNVLLEDVRARPQQILESDAEDIHSWVEGKLIDKVGQLGKKLHTGRSRNDQVATDLKLWCKDTVSELLTANRQLQSALVETAENNQDAVMPGYTHLQRAQPVTFAHWCLAYVEMLARDESRLQDALKRLDVSPLGCGALAGTAYEIDREQLAGWLGFASATRNSLDSVSDRDHVLELLSAAAIGMVHLSRFAEDLIFFNTGEAGFVELSDRVTSGSSLMPQKKNPDALELIRGKCGRVQGALTGMMMTLKGLPLAYNKDMQEDKEGLFDALDTWLDCLHMAALVLDGIQVKRPRCQEAAQQGYANATELADYLVAKGVPFREAHHIVGEAVVEAIRQGKPLEELPLSELQKFSQVIGEDVYPILSLQSCLDKRAAKGGVSPQQVAQAIAFAQARLG.

It belongs to the lyase 1 family. Argininosuccinate lyase subfamily.

The protein resides in the cytoplasm. It catalyses the reaction 2-(N(omega)-L-arginino)succinate = fumarate + L-arginine. Its pathway is amino-acid biosynthesis; L-arginine biosynthesis; L-arginine from L-ornithine and carbamoyl phosphate: step 3/3. This chain is Argininosuccinate lyase, found in Escherichia fergusonii (strain ATCC 35469 / DSM 13698 / CCUG 18766 / IAM 14443 / JCM 21226 / LMG 7866 / NBRC 102419 / NCTC 12128 / CDC 0568-73).